The chain runs to 120 residues: Putative non-specific lipid-transfer protein 14 (120 aa).

A signal peptide spans 1–22 (MTRSFSPVVSLFLLLLQTICSA). 4 disulfides stabilise this stretch: cysteine 30/cysteine 80, cysteine 40/cysteine 57, cysteine 58/cysteine 102, and cysteine 78/cysteine 116.

It belongs to the plant LTP family.

Functionally, plant non-specific lipid-transfer proteins transfer phospholipids as well as galactolipids across membranes. May play a role in wax or cutin deposition in the cell walls of expanding epidermal cells and certain secretory tissues. This Arabidopsis thaliana (Mouse-ear cress) protein is Putative non-specific lipid-transfer protein 14 (LTP14).